The primary structure comprises 389 residues: Cytochrome b (389 aa).

A run of 4 helical transmembrane segments spans residues 32-52 (FGSLLALCLIIQILTGCFLAM), 76-98 (YILRYTHANVASFFFIFIYVHIG), 113-133 (LWSIGVIILVLMMAIGFLGYV), and 179-199 (FFSLHYILPFVLAALAVAHMI). The heme b site is built by His-82 and His-96. Heme b-binding residues include His-183 and His-197. Residue His-202 participates in a ubiquinone binding. The next 4 membrane-spanning stretches (helical) occupy residues 225–245 (FIFKDLVTIFAFFLVLSIIVF), 289–309 (LLGVLAMFGSLLILLIMPFVD), 322–342 (INMVFFTIFVCNFITLGLVGA), and 349–369 (FIFLGQVCTTIYFAYFFVIVP).

The protein belongs to the cytochrome b family. In terms of assembly, fungal cytochrome b-c1 complex contains 10 subunits; 3 respiratory subunits, 2 core proteins and 5 low-molecular weight proteins. Cytochrome b-c1 complex is a homodimer. Requires heme b as cofactor.

The protein resides in the mitochondrion inner membrane. Component of the ubiquinol-cytochrome c reductase complex (complex III or cytochrome b-c1 complex) that is part of the mitochondrial respiratory chain. The b-c1 complex mediates electron transfer from ubiquinol to cytochrome c. Contributes to the generation of a proton gradient across the mitochondrial membrane that is then used for ATP synthesis. In Mycena viridimarginata, this protein is Cytochrome b (COB).